Consider the following 177-residue polypeptide: Large ribosomal subunit protein uL6 (177 aa).

This sequence belongs to the universal ribosomal protein uL6 family. As to quaternary structure, part of the 50S ribosomal subunit.

Its function is as follows. This protein binds to the 23S rRNA, and is important in its secondary structure. It is located near the subunit interface in the base of the L7/L12 stalk, and near the tRNA binding site of the peptidyltransferase center. The chain is Large ribosomal subunit protein uL6 from Pseudomonas putida (strain ATCC 700007 / DSM 6899 / JCM 31910 / BCRC 17059 / LMG 24140 / F1).